We begin with the raw amino-acid sequence, 422 residues long: Tryptophan synthase beta chain (422 aa).

Lys-87 bears the N6-(pyridoxal phosphate)lysine mark.

This sequence belongs to the TrpB family. As to quaternary structure, tetramer of two alpha and two beta chains. Pyridoxal 5'-phosphate serves as cofactor.

It catalyses the reaction (1S,2R)-1-C-(indol-3-yl)glycerol 3-phosphate + L-serine = D-glyceraldehyde 3-phosphate + L-tryptophan + H2O. The protein operates within amino-acid biosynthesis; L-tryptophan biosynthesis; L-tryptophan from chorismate: step 5/5. Functionally, the beta subunit is responsible for the synthesis of L-tryptophan from indole and L-serine. The sequence is that of Tryptophan synthase beta chain (trpB) from Haloferax volcanii (strain ATCC 29605 / DSM 3757 / JCM 8879 / NBRC 14742 / NCIMB 2012 / VKM B-1768 / DS2) (Halobacterium volcanii).